Here is a 250-residue protein sequence, read N- to C-terminus: Small ribosomal subunit protein uS2 (250 aa).

The tract at residues 226-250 (DQQNRQELGEDLGAAVEPAAEEALA) is disordered. A compositionally biased stretch (low complexity) spans 239-250 (AAVEPAAEEALA).

This sequence belongs to the universal ribosomal protein uS2 family.

This is Small ribosomal subunit protein uS2 (rpsB) from Zymomonas mobilis subsp. mobilis (strain ATCC 31821 / ZM4 / CP4).